Reading from the N-terminus, the 134-residue chain is Small ribosomal subunit protein uS8 (134 aa).

This sequence belongs to the universal ribosomal protein uS8 family. In terms of assembly, part of the 30S ribosomal subunit. Contacts proteins S5 and S12.

In terms of biological role, one of the primary rRNA binding proteins, it binds directly to 16S rRNA central domain where it helps coordinate assembly of the platform of the 30S subunit. The polypeptide is Small ribosomal subunit protein uS8 (Pseudothermotoga lettingae (strain ATCC BAA-301 / DSM 14385 / NBRC 107922 / TMO) (Thermotoga lettingae)).